Consider the following 401-residue polypeptide: UDP-GlcNAc:betaGal beta-1,3-N-acetylglucosaminyltransferase 9 (401 aa).

Residues 1-10 lie on the Cytoplasmic side of the membrane; sequence MRRRLRLRRE. The chain crosses the membrane as a helical; Signal-anchor for type II membrane protein span at residues 11-31; that stretch reads ALLTLLLGATLGLLLYAQQEG. Topologically, residues 32–401 are lumenal; sequence AAPTTSAPRA…VPAGPFQWGP (370 aa). Residues 33–85 form a disordered region; it reads APTTSAPRAQGRAAPGPTPGLRVFQAPDTGAAPPAYEGDTPEPPTPTGPFDFG. Residues 38-47 show a composition bias toward low complexity; that stretch reads APRAQGRAAP.

It belongs to the glycosyltransferase 31 family.

Its subcellular location is the golgi apparatus membrane. The polypeptide is UDP-GlcNAc:betaGal beta-1,3-N-acetylglucosaminyltransferase 9 (Bos taurus (Bovine)).